The primary structure comprises 114 residues: MRLLLLTFLGVCCLTPWVVEGVGTEVLEESSCVNLQTQRLPVQKIKTYIIWEGAMRAVIFVTKRGLKICADPEAKWVKAAIKTVDGRASTRKNMAETVPTGAQRSTSTAITLTG.

The first 21 residues, 1–21 (MRLLLLTFLGVCCLTPWVVEG), serve as a signal peptide directing secretion. Cysteines 32 and 69 form a disulfide. The segment at 92–114 (KNMAETVPTGAQRSTSTAITLTG) is disordered. A compositionally biased stretch (polar residues) spans 100 to 114 (TGAQRSTSTAITLTG).

The protein belongs to the intercrine gamma family. Expressed in activated CD8(+) T cells. In the thymus, expressed by medullary thymic epithelial cells.

The protein resides in the secreted. Functionally, chemotactic activity for lymphocytes but not for monocytes or neutrophils. In thymus, mediates medullary accumulation of thymic dendritic cells and contributes to regulatoy T cell development, playing a role in self-tolerance establishment. The protein is Lymphotactin (Xcl1) of Mus musculus (Mouse).